Reading from the N-terminus, the 210-residue chain is Adenylate kinase (210 aa).

An ATP-binding site is contributed by 10-15 (GSGKGT). The interval 30–59 (STGDLFRANISNATPLGKEIKQIVENGQLV) is NMP. AMP is bound by residues Thr31, Arg36, 57–59 (QLV), 85–88 (GFPR), and Gln92. Residues 121 to 158 (GRRICQSCGGIFNIYTLPTKEKGICDLCKGSLYQRKDD) are LID. Position 122 (Arg122) interacts with ATP. Cys125 and Cys128 together coordinate Zn(2+). Residue 131–132 (IF) participates in ATP binding. 2 residues coordinate Zn(2+): Cys145 and Cys148. AMP contacts are provided by Arg155 and Arg166. Lys194 lines the ATP pocket.

This sequence belongs to the adenylate kinase family. As to quaternary structure, monomer.

The protein resides in the cytoplasm. It catalyses the reaction AMP + ATP = 2 ADP. Its pathway is purine metabolism; AMP biosynthesis via salvage pathway; AMP from ADP: step 1/1. Its function is as follows. Catalyzes the reversible transfer of the terminal phosphate group between ATP and AMP. Plays an important role in cellular energy homeostasis and in adenine nucleotide metabolism. The polypeptide is Adenylate kinase (Borrelia turicatae (strain 91E135)).